The chain runs to 893 residues: Phosphatidate phosphatase LPIN2 (893 aa).

Positions 1–108 are N-LIP; sequence MNYVGQLAGQ…LPAYLATSPI (108 aa). At Ser106 the chain carries Phosphoserine. The interval 122–216 is disordered; the sequence is LVKSSGNERP…EDYKEPSLFH (95 aa). A compositionally biased stretch (polar residues) spans 123-151; sequence VKSSGNERPAQSSDVSHTLESEAVFTQSS. Residues 152 to 162 show a composition bias toward basic residues; that stretch reads VKKKKRRRKKC. Residues 153-158 carry the Nuclear localization signal motif; that stretch reads KKKKRR. Residues Ser174, Ser186, and Ser187 each carry the phosphoserine modification. Residues 204 to 213 are compositionally biased toward basic and acidic residues; sequence LKEEDYKEPS. Residues Ser243 and Ser303 each carry the phosphoserine modification. 2 disordered regions span residues 357–400 and 417–456; these read LLDA…PDDI and FPKS…TECL. Low complexity predominate over residues 360–371; sequence ADPVPSPSAEAP. Basic residues predominate over residues 384–393; it reads KKKGVHKRSQ. Positions 423-445 are enriched in polar residues; that stretch reads DPGSRQWPESDTFSGSQSPQSVG. Position 563 is a phosphoserine (Ser563). Residues 568–611 form a disordered region; the sequence is LPETKEGKSEVPPANDLPSNAEEPTSARPAENDTSSDEGSQELE. Residues 601–611 show a composition bias toward acidic residues; it reads TSSDEGSQELE. The C-LIP stretch occupies residues 632–834; that stretch reads YKKSLRLSSD…RIFTVNPKGE (203 aa). A DXDXT motif motif is present at residues 686-690; the sequence is DIDGT. Residues 697–701 carry the LXXIL motif motif; sequence LGQIL.

Belongs to the lipin family. The cofactor is Mg(2+). In terms of tissue distribution, expressed at high level in liver and to some extend in lung, kidney, placenta, spleen, thymus, lymph node, prostate, testes, small intestine, and colon. Expressed also in circulating red blood cells and site of lymphopoiesis.

It localises to the nucleus. It is found in the cytoplasm. The protein localises to the cytosol. Its subcellular location is the endoplasmic reticulum membrane. It carries out the reaction a 1,2-diacyl-sn-glycero-3-phosphate + H2O = a 1,2-diacyl-sn-glycerol + phosphate. With respect to regulation, inhibited by N-ethylmaleimide. In terms of biological role, acts as a magnesium-dependent phosphatidate phosphatase enzyme which catalyzes the conversion of phosphatidic acid to diacylglycerol during triglyceride, phosphatidylcholine and phosphatidylethanolamine biosynthesis in the endoplasmic reticulum membrane. Plays important roles in controlling the metabolism of fatty acids at different levels. Also acts as a nuclear transcriptional coactivator for PPARGC1A to modulate lipid metabolism. The sequence is that of Phosphatidate phosphatase LPIN2 from Mus musculus (Mouse).